The sequence spans 297 residues: Acetaldehyde dehydrogenase (297 aa).

15–18 (SGSI) is a binding site for NAD(+). Cysteine 130 serves as the catalytic Acyl-thioester intermediate. NAD(+) contacts are provided by residues 162–170 (SAGIATREN) and asparagine 272.

This sequence belongs to the acetaldehyde dehydrogenase family.

The catalysed reaction is acetaldehyde + NAD(+) + CoA = acetyl-CoA + NADH + H(+). The protein is Acetaldehyde dehydrogenase (mhpF) of Burkholderia thailandensis (strain ATCC 700388 / DSM 13276 / CCUG 48851 / CIP 106301 / E264).